The following is a 138-amino-acid chain: Putative pre-16S rRNA nuclease (138 aa).

The protein belongs to the YqgF nuclease family.

It localises to the cytoplasm. Could be a nuclease involved in processing of the 5'-end of pre-16S rRNA. The chain is Putative pre-16S rRNA nuclease from Clostridium beijerinckii (strain ATCC 51743 / NCIMB 8052) (Clostridium acetobutylicum).